The following is a 277-amino-acid chain: Hemin import ATP-binding protein HmuV (277 aa).

The region spanning Val19–Arg259 is the ABC transporter domain. Gly51–Ser58 is a binding site for ATP.

It belongs to the ABC transporter superfamily. Heme (hemin) importer (TC 3.A.1.14.5) family. In terms of assembly, the complex is composed of two ATP-binding proteins (HmuV), two transmembrane proteins (HmuU) and a solute-binding protein (HmuT).

It localises to the cell membrane. Part of the ABC transporter complex HmuTUV involved in hemin import. Responsible for energy coupling to the transport system. The sequence is that of Hemin import ATP-binding protein HmuV from Deinococcus geothermalis (strain DSM 11300 / CIP 105573 / AG-3a).